Consider the following 124-residue polypeptide: Small ribosomal subunit protein uS12 (124 aa).

Positions 1–29 are disordered; sequence MATINQLVRKGRKRRVAKSNVPALEASPQ. Asp-89 is subject to 3-methylthioaspartic acid. The interval 101-124 is disordered; it reads AADTAGVDKRRQGRSKYGAKRPKS. A compositionally biased stretch (basic residues) spans 111–124; it reads RQGRSKYGAKRPKS.

This sequence belongs to the universal ribosomal protein uS12 family. As to quaternary structure, part of the 30S ribosomal subunit. Contacts proteins S8 and S17. May interact with IF1 in the 30S initiation complex.

In terms of biological role, with S4 and S5 plays an important role in translational accuracy. Functionally, interacts with and stabilizes bases of the 16S rRNA that are involved in tRNA selection in the A site and with the mRNA backbone. Located at the interface of the 30S and 50S subunits, it traverses the body of the 30S subunit contacting proteins on the other side and probably holding the rRNA structure together. The combined cluster of proteins S8, S12 and S17 appears to hold together the shoulder and platform of the 30S subunit. The sequence is that of Small ribosomal subunit protein uS12 from Alkalilimnicola ehrlichii (strain ATCC BAA-1101 / DSM 17681 / MLHE-1).